A 504-amino-acid polypeptide reads, in one-letter code: Taurochenodeoxycholic 6 alpha-hydroxylase (504 aa).

2 helical membrane-spanning segments follow: residues 6-26 and 110-130; these read LASV…LLLL and APVL…LLNG. C451 lines the heme pocket.

It belongs to the cytochrome P450 family. Heme serves as cofactor. Primarily expressed in liver. Low expression in kidney.

Its subcellular location is the endoplasmic reticulum membrane. The catalysed reaction is taurochenodeoxycholate + reduced [NADPH--hemoprotein reductase] + O2 = taurohyocholate + oxidized [NADPH--hemoprotein reductase] + H2O + H(+). The enzyme catalyses lithocholate + reduced [NADPH--hemoprotein reductase] + O2 = hyodeoxycholate + oxidized [NADPH--hemoprotein reductase] + H2O + H(+). Its function is as follows. Catalyzes the 6 alpha hydroxylation oxidation of taurodeoxycholate to produce the pig specific bile acid taurohyocholic acid. In Sus scrofa (Pig), this protein is Taurochenodeoxycholic 6 alpha-hydroxylase (CYP4A21).